The chain runs to 152 residues: SsrA-binding protein (152 aa).

Belongs to the SmpB family.

The protein resides in the cytoplasm. Functionally, required for rescue of stalled ribosomes mediated by trans-translation. Binds to transfer-messenger RNA (tmRNA), required for stable association of tmRNA with ribosomes. tmRNA and SmpB together mimic tRNA shape, replacing the anticodon stem-loop with SmpB. tmRNA is encoded by the ssrA gene; the 2 termini fold to resemble tRNA(Ala) and it encodes a 'tag peptide', a short internal open reading frame. During trans-translation Ala-aminoacylated tmRNA acts like a tRNA, entering the A-site of stalled ribosomes, displacing the stalled mRNA. The ribosome then switches to translate the ORF on the tmRNA; the nascent peptide is terminated with the 'tag peptide' encoded by the tmRNA and targeted for degradation. The ribosome is freed to recommence translation, which seems to be the essential function of trans-translation. This chain is SsrA-binding protein, found in Rickettsia montanensis.